Here is a 148-residue protein sequence, read N- to C-terminus: Augurin (148 aa).

The first 31 residues, 1-31 (MGTSSARPAVLALAGLALLLLLCLGPGDVSG), serve as a signal peptide directing secretion. 2 consecutive propeptides follow at residues 32–68 (NKLK…LKRA) and 133–148 (SREG…YDDY).

It belongs to the augurin family. As to expression, expressed in the brain, with expression in the choroid plexus and the ventricular ependymal cells (at protein level).

It localises to the secreted. The protein resides in the cytoplasm. It is found in the apical cell membrane. In terms of biological role, probable hormone that may attenuate cell proliferation and induce senescence of oligodendrocyte and neural precursor cells in the central nervous system. ECRG4-induced senescence is characterized by G1 arrest, RB1 dephosphorylation and accelerated CCND1 and CCND3 proteasomal degradation. The polypeptide is Augurin (Rattus norvegicus (Rat)).